The primary structure comprises 265 residues: tRNA pseudouridine synthase A (265 aa).

The active-site Nucleophile is aspartate 55. Tyrosine 113 is a binding site for substrate.

This sequence belongs to the tRNA pseudouridine synthase TruA family. As to quaternary structure, homodimer.

It catalyses the reaction uridine(38/39/40) in tRNA = pseudouridine(38/39/40) in tRNA. Its function is as follows. Formation of pseudouridine at positions 38, 39 and 40 in the anticodon stem and loop of transfer RNAs. The sequence is that of tRNA pseudouridine synthase A from Levilactobacillus brevis (strain ATCC 367 / BCRC 12310 / CIP 105137 / JCM 1170 / LMG 11437 / NCIMB 947 / NCTC 947) (Lactobacillus brevis).